Consider the following 114-residue polypeptide: Immunomodulatory protein FIP-Fve (114 aa).

At Ser-1 the chain carries N-acetylserine.

Belongs to the fungal immunomodulatory protein (FIP) family. Homodimer.

In terms of biological role, lectin with specificity for complex cell-surface carbohydrates. Possesses immunomodulatory activity, stimulates lymphocyte mitogenesis, suppresses systemic anaphylaxis reactions and edema, enhances transcription of IL-2, IFN-gamma and TNF-alpha and hemagglutinates red blood cells. The sequence is that of Immunomodulatory protein FIP-Fve from Flammulina velutipes (Agaricus velutipes).